Reading from the N-terminus, the 592-residue chain is A-type ATP synthase subunit A (592 aa).

233 to 240 (GPFGSGKT) lines the ATP pocket.

The protein belongs to the ATPase alpha/beta chains family. In terms of assembly, has multiple subunits with at least A(3), B(3), C, D, E, F, H, I and proteolipid K(x).

It is found in the cell membrane. The enzyme catalyses ATP + H2O + 4 H(+)(in) = ADP + phosphate + 5 H(+)(out). Component of the A-type ATP synthase that produces ATP from ADP in the presence of a proton gradient across the membrane. The A chain is the catalytic subunit. In Saccharolobus islandicus (strain Y.N.15.51 / Yellowstone #2) (Sulfolobus islandicus), this protein is A-type ATP synthase subunit A.